A 383-amino-acid polypeptide reads, in one-letter code: Mannan endo-1,4-beta-mannosidase (383 aa).

The first 35 residues, 1–35 (MRNARSTLITTAGMAFAVLGLLFALAGPSAGRAEA), serve as a signal peptide directing secretion. Residues 339–377 (GGSTGGTAPNGYPYCVNGGASDPDGDGWGWENSRSCVVR) form the CBM10 domain.

This sequence belongs to the glycosyl hydrolase 5 (cellulase A) family. Monomer.

The enzyme catalyses Random hydrolysis of (1-&gt;4)-beta-D-mannosidic linkages in mannans, galactomannans and glucomannans.. The polypeptide is Mannan endo-1,4-beta-mannosidase (manA) (Streptomyces lividans).